A 363-amino-acid chain; its full sequence is Protein EXORDIUM-like 5 (363 aa).

The signal sequence occupies residues 1-25 (MSSPATTITFFFFFTLSSFFYITSS). N144 carries an N-linked (GlcNAc...) asparagine glycan.

This sequence belongs to the EXORDIUM family.

It is found in the secreted. The protein resides in the extracellular space. The protein localises to the apoplast. In terms of biological role, may play a role in a brassinosteroid-dependent regulation of growth and development. The chain is Protein EXORDIUM-like 5 (EXL5) from Arabidopsis thaliana (Mouse-ear cress).